The chain runs to 124 residues: S-adenosylmethionine decarboxylase proenzyme (124 aa).

Catalysis depends on Ser-63, which acts as the Schiff-base intermediate with substrate; via pyruvic acid. Ser-63 carries the pyruvic acid (Ser); by autocatalysis modification. Residue His-68 is the Proton acceptor; for processing activity of the active site. The Proton donor; for catalytic activity role is filled by Cys-83.

This sequence belongs to the prokaryotic AdoMetDC family. Type 1 subfamily. In terms of assembly, heterotetramer of two alpha and two beta chains arranged as a dimer of alpha/beta heterodimers. Pyruvate is required as a cofactor. Is synthesized initially as an inactive proenzyme. Formation of the active enzyme involves a self-maturation process in which the active site pyruvoyl group is generated from an internal serine residue via an autocatalytic post-translational modification. Two non-identical subunits are generated from the proenzyme in this reaction, and the pyruvate is formed at the N-terminus of the alpha chain, which is derived from the carboxyl end of the proenzyme. The post-translation cleavage follows an unusual pathway, termed non-hydrolytic serinolysis, in which the side chain hydroxyl group of the serine supplies its oxygen atom to form the C-terminus of the beta chain, while the remainder of the serine residue undergoes an oxidative deamination to produce ammonia and the pyruvoyl group blocking the N-terminus of the alpha chain.

The catalysed reaction is S-adenosyl-L-methionine + H(+) = S-adenosyl 3-(methylsulfanyl)propylamine + CO2. It functions in the pathway amine and polyamine biosynthesis; S-adenosylmethioninamine biosynthesis; S-adenosylmethioninamine from S-adenosyl-L-methionine: step 1/1. In terms of biological role, catalyzes the decarboxylation of S-adenosylmethionine to S-adenosylmethioninamine (dcAdoMet), the propylamine donor required for the synthesis of the polyamines spermine and spermidine from the diamine putrescine. The sequence is that of S-adenosylmethionine decarboxylase proenzyme from Geobacillus kaustophilus (strain HTA426).